A 346-amino-acid polypeptide reads, in one-letter code: Prepilin peptidase EppA (346 aa).

10 consecutive transmembrane segments (helical) span residues 1 to 21 (MFGFDNLILGVYLFNFLLILT), 31 to 51 (IIPHFVIILMLIVNLPIGYYF), 56 to 76 (AITSFFATLILCLILGVGMGG), 77 to 97 (GDVKMFTALSPLFAAETIYFV), 101 to 121 (ISILIGLSALFAAIFPMTKIL), 128 to 148 (IIPSSAYLAMLIGIIVSITEI), 149 to 169 (YSIGNTKTILWSYIILSIFIS), 182 to 202 (LGYITPIYLIGFYLLNPAYFV), 206 to 226 (VLISFFVYIGQLSLISLVIYA), and 321 to 341 (PFVPFVLVAYCVITLLNMGVI).

It belongs to the peptidase A24 family.

Its subcellular location is the cell membrane. Its function is as follows. Peptidase that processes the N-terminus of prepilins. Specifically cleaves proteins with a class III (type IV pilin-like) signal sequence, such as the major structural pilin EpdE and the minor pilins EpdA, EpdC and EpdD. Is not able to cleave the preflagellin subunit FlaB2. The protein is Prepilin peptidase EppA of Methanococcus maripaludis (strain DSM 14266 / JCM 13030 / NBRC 101832 / S2 / LL).